The chain runs to 20 residues: MNRLKEIFQKEITPALVSKF.

This sequence belongs to the universal ribosomal protein uL5 family. Part of the 50S ribosomal subunit; part of the 5S rRNA/L5/L18/L25 subcomplex. Contacts the 5S rRNA and the P site tRNA. Forms a bridge to the 30S subunit in the 70S ribosome.

Its function is as follows. This is one of the proteins that bind and probably mediate the attachment of the 5S RNA into the large ribosomal subunit, where it forms part of the central protuberance. In the 70S ribosome it contacts protein S13 of the 30S subunit (bridge B1b), connecting the two subunits; this bridge is implicated in subunit movement. Contacts the P site tRNA; the 5S rRNA and some of its associated proteins might help stabilize positioning of ribosome-bound tRNAs. The chain is Large ribosomal subunit protein uL5 (rplE) from Bacillus cereus.